A 121-amino-acid polypeptide reads, in one-letter code: Large ribosomal subunit protein uL24 (121 aa).

This sequence belongs to the universal ribosomal protein uL24 family. In terms of assembly, part of the 50S ribosomal subunit.

In terms of biological role, one of two assembly initiator proteins, it binds directly to the 5'-end of the 23S rRNA, where it nucleates assembly of the 50S subunit. Its function is as follows. Located at the polypeptide exit tunnel on the outside of the subunit. This Thermococcus kodakarensis (strain ATCC BAA-918 / JCM 12380 / KOD1) (Pyrococcus kodakaraensis (strain KOD1)) protein is Large ribosomal subunit protein uL24.